The sequence spans 535 residues: Heat shock factor protein 2 (535 aa).

Residues K2, K82, K135, K139, K151, K210, K218, and K237 each participate in a glycyl lysine isopeptide (Lys-Gly) (interchain with G-Cter in SUMO2) cross-link. Residues V7–S112 mediate DNA binding. Positions N119–V192 are hydrophobic repeat HR-A/B. Residues Q298 to A325 are disordered. The segment covering G313 to A325 has biased composition (low complexity). Residues L359 to I384 are hydrophobic repeat HR-C. A disordered region spans residues T418–P437. Residues V426–P437 show a composition bias toward basic and acidic residues.

Belongs to the HSF family. In terms of assembly, DNA-binding homotrimer in stressed or heat shocked cells, otherwise found as a homodimer. In terms of tissue distribution, isoform alpha is expressed predominantly in testis while isoform beta is expressed predominantly in heart and brain.

The protein resides in the cytoplasm. It is found in the nucleus. DNA-binding protein that specifically binds heat shock promoter elements (HSE) and activates transcription. In higher eukaryotes, HSF is unable to bind to the HSE unless the cells are heat shocked. HSF2 is expressed in a form that binds DNA constitutively but loses DNA binding by incubation at greater than 41 degrees C. In Mus musculus (Mouse), this protein is Heat shock factor protein 2 (Hsf2).